The following is a 345-amino-acid chain: NADPH dehydrogenase (345 aa).

23 to 26 (SPMC) contributes to the FMN binding site. Tyr-28 contributes to the substrate binding site. Ala-60 and Gln-102 together coordinate FMN. 164–167 (HGAH) is a binding site for substrate. Residues Arg-215 and 307–308 (GR) contribute to the FMN site.

It belongs to the NADH:flavin oxidoreductase/NADH oxidase family. NamA subfamily. In terms of assembly, homotetramer. Requires FMN as cofactor.

It catalyses the reaction A + NADPH + H(+) = AH2 + NADP(+). Its function is as follows. Catalyzes the reduction of the double bond of an array of alpha,beta-unsaturated aldehydes and ketones. It also reduces the nitro group of nitroester and nitroaromatic compounds. It could have a role in detoxification processes. The chain is NADPH dehydrogenase from Bacillus anthracis (strain CDC 684 / NRRL 3495).